The primary structure comprises 749 residues: 5-methyltetrahydropteroyltriglutamate--homocysteine methyltransferase (749 aa).

Residues 15–18 (RELK) and K114 contribute to the 5-methyltetrahydropteroyltri-L-glutamate site. Residues 425–427 (IGS) and E478 contribute to the L-homocysteine site. Residues 425–427 (IGS) and E478 contribute to the L-methionine site. W555 is a binding site for 5-methyltetrahydropteroyltri-L-glutamate. L-homocysteine is bound at residue D593. Residue D593 participates in L-methionine binding. A 5-methyltetrahydropteroyltri-L-glutamate-binding site is contributed by E599. Positions 636, 638, and 660 each coordinate Zn(2+). H689 (proton donor) is an active-site residue. Zn(2+) is bound at residue C721.

This sequence belongs to the vitamin-B12 independent methionine synthase family. Requires Zn(2+) as cofactor.

It carries out the reaction 5-methyltetrahydropteroyltri-L-glutamate + L-homocysteine = tetrahydropteroyltri-L-glutamate + L-methionine. Its pathway is amino-acid biosynthesis; L-methionine biosynthesis via de novo pathway; L-methionine from L-homocysteine (MetE route): step 1/1. Functionally, catalyzes the transfer of a methyl group from 5-methyltetrahydrofolate to homocysteine resulting in methionine formation. In Streptococcus pneumoniae serotype 19F (strain G54), this protein is 5-methyltetrahydropteroyltriglutamate--homocysteine methyltransferase.